A 249-amino-acid chain; its full sequence is Type I iodothyronine deiodinase (249 aa).

The Extracellular segment spans residues 1 to 12 (MELPLPGLWLKR). A helical; Signal-anchor for type III membrane protein membrane pass occupies residues 13-33 (LWVLFQVALHVAMGKVLMTLF). Residues 34–249 (PGRVKQDILA…VRAVLEKLHS (216 aa)) lie on the Cytoplasmic side of the membrane. U126 is an active-site residue. Residue U126 is a non-standard amino acid, selenocysteine.

Belongs to the iodothyronine deiodinase family. As to quaternary structure, predominantly monomer. Can form homodimers but homodimerization is not essential for enzyme activity.

Its subcellular location is the cell membrane. The protein resides in the endoplasmic reticulum membrane. It localises to the basolateral cell membrane. The enzyme catalyses 3,3',5-triiodo-L-thyronine + iodide + A + H(+) = L-thyroxine + AH2. The catalysed reaction is 3,3',5'-triiodo-L-thyronine + iodide + A + H(+) = L-thyroxine + AH2. It catalyses the reaction 3,3'-diiodo-L-thyronine + iodide + A + H(+) = 3,3',5'-triiodo-L-thyronine + AH2. It carries out the reaction 3,3'-diiodo-L-thyronine + iodide + A + H(+) = 3,3',5-triiodo-L-thyronine + AH2. The enzyme catalyses 3'-iodo-L-thyronine + iodide + A + H(+) = 3',5'-diiodo-L-thyronine + AH2. The catalysed reaction is 3-iodo-L-thyronine + iodide + A + H(+) = 3,5-diiodo-L-thyronine + AH2. It catalyses the reaction 3-iodo-L-thyronine + iodide + A + H(+) = 3,3'-diiodo-L-thyronine + AH2. It carries out the reaction 3,3'-diiodothyronamine + iodide + A + H(+) = 3,3',5'-triiodothyronamine + AH2. The enzyme catalyses 3'-iodothyronamine + iodide + A + H(+) = 3',5'-diiodothyronamine + AH2. The catalysed reaction is 3-iodothyronamine + iodide + A + H(+) = 3,3'-diiodothyronamine + AH2. It catalyses the reaction 3,3'-diiodothyronamine + iodide + A + H(+) = 3,3',5-triiodothyronamine + AH2. It carries out the reaction 3-iodothyronamine + iodide + A + H(+) = 3,5-diiodothyronamine + AH2. The enzyme catalyses 3,3'-diiodo-L-thyronine sulfate + iodide + A + H(+) = 3,3',5'-triiodo-L-thyronine sulfate + AH2. The catalysed reaction is 3,3',5'-triiodo-L-thyronine sulfate + iodide + A + H(+) = L-thyroxine sulfate + AH2. It catalyses the reaction 3,3'-diiodo-L-thyronine sulfate + iodide + A + H(+) = 3,3',5-triiodo-L-thyronine sulfate + AH2. In terms of biological role, plays a crucial role in the metabolism of thyroid hormones (TH) and has specific roles in TH activation and inactivation by deiodination. Catalyzes the deiodination of L-thyroxine (T4) to 3,5,3'-triiodothyronine (T3) and 3,3',5'-triiodothyronine (rT3) to 3,3'-diiodothyronine (3,3'-T2) via outer-ring deiodination (ORD). Catalyzes the deiodination of T4 to rT3, T3 to 3,3'-T2, 3,5-diiodothyronine (3,5-T2) to 3-monoiodothyronine (3-T1) and 3,3'-T2 to 3-T1 via inner-ring deiodination (IRD). Catalyzes the deiodination of 3',5'-diiodothyronine (3',5'-T2) to 3'-monoiodothyronine (3'-T1) via ORD. Catalyzes the phenolic ring deiodinations of 3,3',5'-triiodothyronamine, 3',5'-diiodothyronamine and 3,3'-diiodothyronamine as well as tyrosyl ring deiodinations of 3,5,3'-triiodothyronamine and 3,5-diiodothyronamine. Catalyzes the deiodination of L-thyroxine sulfate and 3,3',5-triiodo-L-thyronine sulfate via IRD and of 3,3',5'-triiodo-L-thyronine sulfate via ORD. This chain is Type I iodothyronine deiodinase (DIO1), found in Sus scrofa (Pig).